We begin with the raw amino-acid sequence, 529 residues long: Peptide chain release factor 3 (529 aa).

One can recognise a tr-type G domain in the interval 11–280; the sequence is ARRRTFAIIS…GLVEWAPSPM (270 aa). Residues 20-27, 88-92, and 142-145 contribute to the GTP site; these read SHPDAGKT, DTPGH, and NKLD.

The protein belongs to the TRAFAC class translation factor GTPase superfamily. Classic translation factor GTPase family. PrfC subfamily.

Its subcellular location is the cytoplasm. Its function is as follows. Increases the formation of ribosomal termination complexes and stimulates activities of RF-1 and RF-2. It binds guanine nucleotides and has strong preference for UGA stop codons. It may interact directly with the ribosome. The stimulation of RF-1 and RF-2 is significantly reduced by GTP and GDP, but not by GMP. The chain is Peptide chain release factor 3 from Erwinia tasmaniensis (strain DSM 17950 / CFBP 7177 / CIP 109463 / NCPPB 4357 / Et1/99).